A 226-amino-acid chain; its full sequence is Brachyurin (226 aa).

Positions 1–223 (IVGGVEAVPN…FLDWIQTQTG (223 aa)) constitute a Peptidase S1 domain. Cysteine 26 and cysteine 42 are joined by a disulfide. Residues histidine 41 and aspartate 87 each act as charge relay system in the active site. Cystine bridges form between cysteine 151/cysteine 164 and cysteine 174/cysteine 200. Residue serine 178 is the Charge relay system of the active site.

This sequence belongs to the peptidase S1 family.

The catalysed reaction is Hydrolysis of proteins, with broad specificity for peptide bonds. Native collagen is cleaved about 75% of the length of the molecule from the N-terminus. Low activity on small molecule substrates of both trypsin and chymotrypsin.. Its function is as follows. This enzyme is a serine protease capable of degrading the native triple helix of collagen. The polypeptide is Brachyurin (Leptuca pugilator (Atlantic sand fiddler crab)).